The sequence spans 972 residues: 116 kDa U5 small nuclear ribonucleoprotein component (972 aa).

Position 1 is an N-acetylmethionine (M1). The interval 1–53 is disordered; the sequence is MDTDLYDEFGNYIGPELDSDEDDDELGRETKDLDEVDEDEDDDDVGDHDEDHP. 2 stretches are compositionally biased toward acidic residues: residues 17–26 and 34–48; these read LDSDEDDDEL and DEVD…VGDH. A Phosphoserine modification is found at S19. Residue K64 forms a Glycyl lysine isopeptide (Lys-Gly) (interchain with G-Cter in SUMO1); alternate linkage. K64 participates in a covalent cross-link: Glycyl lysine isopeptide (Lys-Gly) (interchain with G-Cter in SUMO2); alternate. A Phosphothreonine modification is found at T86. Residues 127 to 409 form the tr-type G domain; that stretch reads ELIRNVTLCG…GIHLTKEELK (283 aa). GTP contacts are provided by residues 136–143, 204–208, and 258–261; these read GHLHHGKT, DTPGH, and NKID.

The protein belongs to the TRAFAC class translation factor GTPase superfamily. Classic translation factor GTPase family. EF-G/EF-2 subfamily. As to quaternary structure, component of the U5 snRNP and the U4/U6-U5 tri-snRNP complex, a building block of the spliceosome. The U4/U6-U5 tri-snRNP complex is composed of the U4, U6 and U5 snRNAs and at least PRPF3, PRPF4, PRPF6, PRPF8, PRPF31, SNRNP200, TXNL4A, SNRNP40, DDX23, CD2BP2, PPIH, SNU13, EFTUD2, SART1 and USP39. Component of the pre-catalytic, catalytic and post-catalytic spliceosome complexes. Component of the minor spliceosome, which splices U12-type introns. Within this complex, interacts with CRIPT. Interacts with ERBB4 and PRPF8. Interacts with PIH1D1. Interacts with RPAP3 and URI1 in a ZNHIT2-dependent manner. Interacts with NRDE2. Interacts with FAM50A. Interacts with UBL5.

It is found in the nucleus. In terms of biological role, required for pre-mRNA splicing as component of the spliceosome, including pre-catalytic, catalytic and post-catalytic spliceosomal complexes. Component of the U5 snRNP and the U4/U6-U5 tri-snRNP complex, a building block of the spliceosome. As a component of the minor spliceosome, involved in the splicing of U12-type introns in pre-mRNAs. The protein is 116 kDa U5 small nuclear ribonucleoprotein component (EFTUD2) of Bos taurus (Bovine).